Consider the following 557-residue polypeptide: CTP synthase (557 aa).

An amidoligase domain region spans residues 1-267 (MAKYIFVTGG…GAYLTQRLGL (267 aa)). Ser-13 is a CTP binding site. Residue Ser-13 coordinates UTP. 14 to 19 (SVGKGI) is a binding site for ATP. An L-glutamine-binding site is contributed by Tyr-54. An ATP-binding site is contributed by Asp-71. Asp-71 and Glu-141 together coordinate Mg(2+). Residues 148–150 (DIE), 188–193 (KTKPTQ), and Lys-224 contribute to the CTP site. UTP-binding positions include 188 to 193 (KTKPTQ) and Lys-224. The Glutamine amidotransferase type-1 domain occupies 292–535 (AIALVGKYVE…VAAAAKTFRE (244 aa)). Gly-354 provides a ligand contact to L-glutamine. Cys-381 serves as the catalytic Nucleophile; for glutamine hydrolysis. L-glutamine contacts are provided by residues 382-385 (LGMQ), Glu-406, and Arg-463. Residues His-508 and Glu-510 contribute to the active site. Positions 536 to 557 (GDQRPLPLEQNGAVTEHEPHSR) are disordered.

It belongs to the CTP synthase family. In terms of assembly, homotetramer.

The enzyme catalyses UTP + L-glutamine + ATP + H2O = CTP + L-glutamate + ADP + phosphate + 2 H(+). It carries out the reaction L-glutamine + H2O = L-glutamate + NH4(+). The catalysed reaction is UTP + NH4(+) + ATP = CTP + ADP + phosphate + 2 H(+). It participates in pyrimidine metabolism; CTP biosynthesis via de novo pathway; CTP from UDP: step 2/2. Allosterically activated by GTP, when glutamine is the substrate; GTP has no effect on the reaction when ammonia is the substrate. The allosteric effector GTP functions by stabilizing the protein conformation that binds the tetrahedral intermediate(s) formed during glutamine hydrolysis. Inhibited by the product CTP, via allosteric rather than competitive inhibition. Catalyzes the ATP-dependent amination of UTP to CTP with either L-glutamine or ammonia as the source of nitrogen. Regulates intracellular CTP levels through interactions with the four ribonucleotide triphosphates. The sequence is that of CTP synthase from Roseiflexus sp. (strain RS-1).